The sequence spans 208 residues: FMN-dependent NADH:quinone oxidoreductase 1 (208 aa).

Ser-10 is a binding site for FMN.

The protein belongs to the azoreductase type 1 family. Homodimer. The cofactor is FMN.

The enzyme catalyses 2 a quinone + NADH + H(+) = 2 a 1,4-benzosemiquinone + NAD(+). It catalyses the reaction N,N-dimethyl-1,4-phenylenediamine + anthranilate + 2 NAD(+) = 2-(4-dimethylaminophenyl)diazenylbenzoate + 2 NADH + 2 H(+). In terms of biological role, quinone reductase that provides resistance to thiol-specific stress caused by electrophilic quinones. Contributes to resistance to 2-methylhydroquinone (2-MHQ) and catechol. Functionally, also exhibits azoreductase activity. Catalyzes the reductive cleavage of the azo bond in aromatic azo compounds to the corresponding amines. In Bacillus subtilis (strain 168), this protein is FMN-dependent NADH:quinone oxidoreductase 1.